Here is a 139-residue protein sequence, read N- to C-terminus: Plastocyanin (139 aa).

Residues 1-34 (MKLISASLRRFSLAVLTILLVVSSFAVFTPSASA) form the signal peptide. Positions 35–139 (ETYQVKLGTD…GMVGTITVQG (105 aa)) constitute a Plastocyanin-like domain. Positions 73, 123, 126, and 131 each coordinate Cu cation.

This sequence belongs to the plastocyanin family. It depends on Cu(2+) as a cofactor.

The protein resides in the cellular thylakoid membrane. Its function is as follows. Participates in electron transfer between P700 and the cytochrome b6-f complex in photosystem I. In Nostoc punctiforme (strain ATCC 29133 / PCC 73102), this protein is Plastocyanin.